We begin with the raw amino-acid sequence, 397 residues long: Lysophospholipid transporter LplT (397 aa).

Residues 1–17 lie on the Periplasmic side of the membrane; the sequence is MSESVHTNTSLWSKGMK. A helical transmembrane segment spans residues 18–38; it reads AVIVAQFLSAFGDNALLFATL. The Cytoplasmic portion of the chain corresponds to 39–52; that stretch reads ALLKAQFYPEWSQP. A helical membrane pass occupies residues 53-73; that stretch reads ILQMVFVGAYILFAPFVGQVA. Residues 74 to 90 are Periplasmic-facing; sequence DSFAKGRVMMFANGLKL. A helical membrane pass occupies residues 91-111; sequence LGAASICFGINPFLGYTLVGV. Over 112–144 the chain is Cytoplasmic; sequence GAAAYSPAKYGILGELTTGSKLVKANGLMEAST. Residues 145–165 traverse the membrane as a helical segment; that stretch reads IAAILLGSVAGGVLADWHVLV. Residue A166 is a topological domain, periplasmic. The chain crosses the membrane as a helical span at residues 167 to 187; that stretch reads LAACALAYGGAVVANIYIPKL. At 188-226 the chain is on the cytoplasmic side; it reads AAARPGQSWNLISMTRSFLNACTSLWRNGETRFSLVGTS. Residues 227–247 form a helical membrane-spanning segment; sequence LFWGAGVTLRFLLVLWVPVAL. Over 248 to 256 the chain is Periplasmic; that stretch reads GITDNATPT. A helical transmembrane segment spans residues 257–277; it reads YLNAMVAIGIVVGAGAAAKLV. Residues 278–280 lie on the Cytoplasmic side of the membrane; the sequence is TLE. A helical membrane pass occupies residues 281 to 301; the sequence is TVSRCMPAGILIGVVVLIFSL. Residues 302-304 are Periplasmic-facing; it reads QHE. A helical membrane pass occupies residues 305–325; sequence LLPAYALLMLIGVLGGFFVVP. Residues 326 to 343 lie on the Cytoplasmic side of the membrane; that stretch reads LNALLQERGKKSVGAGNA. Residues 344 to 364 form a helical membrane-spanning segment; sequence IAVQNLGENSAMLLMLGIYSL. Over 365–366 the chain is Periplasmic; it reads AV. The chain crosses the membrane as a helical span at residues 367–387; the sequence is MVGIPVVPIGIGFGALFALAI. Topologically, residues 388-397 are cytoplasmic; that stretch reads TALWIWQRRH.

The protein belongs to the major facilitator superfamily. LplT (TC 2.A.1.42) family.

It localises to the cell inner membrane. In terms of biological role, catalyzes the facilitated diffusion of 2-acyl-glycero-3-phosphoethanolamine (2-acyl-GPE) into the cell. This chain is Lysophospholipid transporter LplT, found in Escherichia coli O7:K1 (strain IAI39 / ExPEC).